A 430-amino-acid chain; its full sequence is Potassium channel subfamily K member 12 (430 aa).

The Cytoplasmic portion of the chain corresponds to 1–38 (MSSRSPRPPPRRCRRRLPRPSCCCCCCRRSHLNEDTGR). Residues 11-16 (RRCRRR) form an ER retention/retrieval signal region. Residues 39-59 (FVLLAALIGLYLVAGATVFSA) traverse the membrane as a helical segment. N-linked (GlcNAc...) asparagine glycosylation is present at asparagine 78. An intramembrane region (pore-forming) is located at residues 114–134 (WDFPGAFYFVGTVVSTIGFGM). K(+) contacts are provided by threonine 129, isoleucine 130, and glycine 131. Positions 129 to 134 (TIGFGM) are selectivity filter 1. A helical membrane pass occupies residues 145–165 (FLIAYGLFGCAGTILFFNLFL). The Cytoplasmic segment spans residues 166-212 (ERIISLLAFIMRACRERQLRRSGLLPATFRRGSALSEADSLAGWKPS). The chain crosses the membrane as a helical span at residues 213-233 (VYHVLLILGLFAVLLACCASA). Positions 243 to 263 (YVDSLYFCFVTFSTIGFGDLV) form an intramembrane region, pore-forming. K(+) contacts are provided by threonine 256, isoleucine 257, glycine 258, and phenylalanine 259. The segment at 256–261 (TIGFGD) is selectivity filter 2. A helical membrane pass occupies residues 282–302 (LFILLGVCCIYSLFNVISILI). Topologically, residues 303-430 (KQVLNWMLRK…NRLAETSASR (128 aa)) are cytoplasmic.

Belongs to the two pore domain potassium channel (TC 1.A.1.8) family. Homodimer. Heterodimer with KCNK13. Highly expressed in most brain regions. Also expressed in other tissues such as lung, kidney, liver, stomach and spleen.

The protein resides in the cell membrane. The protein localises to the endoplasmic reticulum membrane. It carries out the reaction K(+)(in) = K(+)(out). K(+) channel subunit that may homo- and heterodimerize to form functional channels with distinct regulatory and gating properties. Can heterodimerize with KCNK13 subunit to conduct K(+) outward rectifying currents at the plasma membrane. The homodimers are mainly retained in the endoplasmic reticulum compartment and may be targeted to the cell surface upon phosphorylation or other activation signals yet to be elucidated. This Rattus norvegicus (Rat) protein is Potassium channel subfamily K member 12 (Kcnk12).